The sequence spans 102 residues: Large ribosomal subunit protein bL21 (102 aa).

This sequence belongs to the bacterial ribosomal protein bL21 family. Part of the 50S ribosomal subunit. Contacts protein L20.

Functionally, this protein binds to 23S rRNA in the presence of protein L20. The chain is Large ribosomal subunit protein bL21 from Campylobacter lari (strain RM2100 / D67 / ATCC BAA-1060).